The chain runs to 252 residues: 5-oxoprolinase subunit A (252 aa).

It belongs to the LamB/PxpA family. As to quaternary structure, forms a complex composed of PxpA, PxpB and PxpC.

The enzyme catalyses 5-oxo-L-proline + ATP + 2 H2O = L-glutamate + ADP + phosphate + H(+). In terms of biological role, catalyzes the cleavage of 5-oxoproline to form L-glutamate coupled to the hydrolysis of ATP to ADP and inorganic phosphate. The polypeptide is 5-oxoprolinase subunit A (Mycobacterium marinum (strain ATCC BAA-535 / M)).